The chain runs to 348 residues: MRIEQELKLGFKDVLFRPKRSTLKSRSQVNLTREFTFKHSGRQWSGVPVIAANMDSVGSFEMAKALSQHGVMTAIHKHYTVQDWADFVKDADSETLNKVMVSTGTSEADFQKTKDVMALSDELIFICIDIANGYSEHLVQYVQQVRAAFPDKVISAGNVVTGDMVEELILAGADIVKVGIGPGSVCTTRVKTGVGYPQLSAIIECADAAHGLGGRIIGDGGCACAGDVAKAFGGGADFVMLGGMLAGHEESGGEIVLKDGESYMKFYGMSSKSAMDKHSGGVAGYRAAEGKTVLLPYRGSVHGTIQDILGGVRSTCTYVGAAELRELTKRTTFIRVLEQENNVFGKEK.

108-131 (ADFQKTKDVMALSDELIFICIDIA) lines the NADP(+) pocket. K(+) contacts are provided by glycine 181 and glycine 183. Catalysis depends on cysteine 186, which acts as the Thioimidate intermediate. Residue 216–239 (IIGDGGCACAGDVAKAFGGGADFV) coordinates NADP(+).

The protein belongs to the IMPDH/GMPR family. GuaC type 1 subfamily. In terms of assembly, homotetramer.

The enzyme catalyses IMP + NH4(+) + NADP(+) = GMP + NADPH + 2 H(+). Catalyzes the irreversible NADPH-dependent deamination of GMP to IMP. It functions in the conversion of nucleobase, nucleoside and nucleotide derivatives of G to A nucleotides, and in maintaining the intracellular balance of A and G nucleotides. The sequence is that of GMP reductase from Vibrio vulnificus (strain CMCP6).